A 643-amino-acid chain; its full sequence is 1-deoxy-D-xylulose-5-phosphate synthase (643 aa).

Residues His-78 and 119-121 (AHS) each bind thiamine diphosphate. Asp-150 is a binding site for Mg(2+). Thiamine diphosphate is bound by residues 151-152 (GS), Asn-179, Tyr-288, and Glu-370. Asn-179 contacts Mg(2+).

It belongs to the transketolase family. DXPS subfamily. As to quaternary structure, homodimer. Mg(2+) is required as a cofactor. It depends on thiamine diphosphate as a cofactor.

It catalyses the reaction D-glyceraldehyde 3-phosphate + pyruvate + H(+) = 1-deoxy-D-xylulose 5-phosphate + CO2. It functions in the pathway metabolic intermediate biosynthesis; 1-deoxy-D-xylulose 5-phosphate biosynthesis; 1-deoxy-D-xylulose 5-phosphate from D-glyceraldehyde 3-phosphate and pyruvate: step 1/1. Functionally, catalyzes the acyloin condensation reaction between C atoms 2 and 3 of pyruvate and glyceraldehyde 3-phosphate to yield 1-deoxy-D-xylulose-5-phosphate (DXP). The sequence is that of 1-deoxy-D-xylulose-5-phosphate synthase from Brucella ovis (strain ATCC 25840 / 63/290 / NCTC 10512).